Reading from the N-terminus, the 488-residue chain is Katanin p60 ATPase-containing subunit A-like 1 (488 aa).

At M1 the chain carries N-acetylmethionine. The disordered stretch occupies residues 128–179 (GAGARGLVGRAHQISKSDKAASRDKDYRARGRDDKARKNMQDGASDGEIPKF). Residues 142–167 (SKSDKAASRDKDYRARGRDDKARKNM) show a composition bias toward basic and acidic residues. S172 is subject to Phosphoserine. 246–253 (GPPGTGKT) contacts ATP.

Belongs to the AAA ATPase family. Katanin p60 subunit A1 subfamily. A-like 1 sub-subfamily. Interacts with KATNB1 and KATNBL1.

The protein localises to the cytoplasm. Its subcellular location is the cytoskeleton. It is found in the spindle pole. The protein resides in the spindle. It catalyses the reaction n ATP + n H2O + a microtubule = n ADP + n phosphate + (n+1) alpha/beta tubulin heterodimers.. Its function is as follows. Regulates microtubule dynamics in Sertoli cells, a process that is essential for spermiogenesis and male fertility. Severs microtubules in an ATP-dependent manner, promoting rapid reorganization of cellular microtubule arrays. Has microtubule-severing activity in vitro. This Rattus norvegicus (Rat) protein is Katanin p60 ATPase-containing subunit A-like 1 (Katnal1).